We begin with the raw amino-acid sequence, 254 residues long: Small ribosomal subunit protein uS2 (254 aa).

It belongs to the universal ribosomal protein uS2 family.

The protein is Small ribosomal subunit protein uS2 of Borrelia hermsii (strain HS1 / DAH).